Here is a 263-residue protein sequence, read N- to C-terminus: Ribosomal RNA small subunit methyltransferase A (263 aa).

S-adenosyl-L-methionine-binding residues include asparagine 20, leucine 22, glycine 47, glutamate 68, aspartate 90, and asparagine 110.

It belongs to the class I-like SAM-binding methyltransferase superfamily. rRNA adenine N(6)-methyltransferase family. RsmA subfamily.

It localises to the cytoplasm. It catalyses the reaction adenosine(1518)/adenosine(1519) in 16S rRNA + 4 S-adenosyl-L-methionine = N(6)-dimethyladenosine(1518)/N(6)-dimethyladenosine(1519) in 16S rRNA + 4 S-adenosyl-L-homocysteine + 4 H(+). Specifically dimethylates two adjacent adenosines (A1518 and A1519) in the loop of a conserved hairpin near the 3'-end of 16S rRNA in the 30S particle. May play a critical role in biogenesis of 30S subunits. The protein is Ribosomal RNA small subunit methyltransferase A of Chlorobium limicola (strain DSM 245 / NBRC 103803 / 6330).